A 217-amino-acid polypeptide reads, in one-letter code: Probable GTP-binding protein EngB (217 aa).

An EngB-type G domain is found at 32–205 (GTPQIAFAGR…RKIVYSLIET (174 aa)). GTP contacts are provided by residues 40 to 47 (GRSNAGKS), 67 to 71 (GKTKL), 85 to 88 (DLPG), 152 to 155 (TKID), and 184 to 186 (VSN). Mg(2+) contacts are provided by Ser47 and Thr69.

This sequence belongs to the TRAFAC class TrmE-Era-EngA-EngB-Septin-like GTPase superfamily. EngB GTPase family. Mg(2+) serves as cofactor.

Functionally, necessary for normal cell division and for the maintenance of normal septation. The sequence is that of Probable GTP-binding protein EngB from Leptospira interrogans serogroup Icterohaemorrhagiae serovar copenhageni (strain Fiocruz L1-130).